The chain runs to 378 residues: MYKILKTDGRAKRAEFTTVHGTVQTPVFMNVGTVAAIKGAVATTDLQQIGTQIELSNTYHLHVRPGDKIIKQLGGLHKFMNWDKPILTDSGGFQVFSLAGLRKIKEEGVTFQSHIDGHKIFMGPEESMQIQSNLGSTIAMAFDECAPAKADRKYIQNSVDRTYRWLERCKKEMARLNSLPDTVNPDQMLFGIDQGGVFNDIRIDHAKRISELDLDGYAVGGLAVGETHEEMYDVLDNVVPYLPQDKPTYLMGVGTPANILESVDRGIDFFDCVYPSRNGRHGHVYTKFGKINLFNAKYETDTAPIEEGCGCPCCQNYSRAYVRHLLKAKEMLGMRLCVLHNLYYYNHLMTDIRAAIEEGRYAGFKEEALYQMKTYDKQ.

Catalysis depends on Asp-89, which acts as the Proton acceptor. Substrate is bound by residues 89–93 (DSGGF), Asp-143, Gln-194, and Gly-221. The RNA binding stretch occupies residues 252-258 (GVGTPAN). Asp-271 serves as the catalytic Nucleophile. 4 residues coordinate Zn(2+): Cys-309, Cys-311, Cys-314, and His-340.

Belongs to the queuine tRNA-ribosyltransferase family. Homodimer. Within each dimer, one monomer is responsible for RNA recognition and catalysis, while the other monomer binds to the replacement base PreQ1. Zn(2+) is required as a cofactor.

The enzyme catalyses 7-aminomethyl-7-carbaguanine + guanosine(34) in tRNA = 7-aminomethyl-7-carbaguanosine(34) in tRNA + guanine. It functions in the pathway tRNA modification; tRNA-queuosine biosynthesis. In terms of biological role, catalyzes the base-exchange of a guanine (G) residue with the queuine precursor 7-aminomethyl-7-deazaguanine (PreQ1) at position 34 (anticodon wobble position) in tRNAs with GU(N) anticodons (tRNA-Asp, -Asn, -His and -Tyr). Catalysis occurs through a double-displacement mechanism. The nucleophile active site attacks the C1' of nucleotide 34 to detach the guanine base from the RNA, forming a covalent enzyme-RNA intermediate. The proton acceptor active site deprotonates the incoming PreQ1, allowing a nucleophilic attack on the C1' of the ribose to form the product. After dissociation, two additional enzymatic reactions on the tRNA convert PreQ1 to queuine (Q), resulting in the hypermodified nucleoside queuosine (7-(((4,5-cis-dihydroxy-2-cyclopenten-1-yl)amino)methyl)-7-deazaguanosine). This is Queuine tRNA-ribosyltransferase from Lachnospira eligens (strain ATCC 27750 / DSM 3376 / VPI C15-48 / C15-B4) (Eubacterium eligens).